The following is a 347-amino-acid chain: MTATTDTLTITRPDDWHLHVRDGEPLRTVVPHTAAQFGRAIIMPNLRPPVTTAQQAAEYKQRILAAVPEGVAFEPLMTLYLTDNLPPDEIARARDAGVVAAKLYPAGATTNSDAGVTDLRKTYKTLEAMQKAGLLLLVHGEVTSSDIDLFDREAVFIEQQLIPLRRHFPELKIVFEHITTKEAAQYVKEAGRFTAATITAHHLLYNRNAIFTGGIRPHYYCLPVLKREVHRQALVQAATSGSDKFFLGTDSAPHPAHLKEHATGCAGCYTAHAAIEMYAEAFDNAGALDKLEGFASVHGPAFYGLPRNTGTVTLRRESWTPPDSFAFGEAALKPLRAGEALPWRLVA.

Zn(2+)-binding residues include His-17 and His-19. Residues 19 to 21 (HVR) and Asn-45 each bind substrate. Zn(2+)-binding residues include Lys-102, His-139, and His-177. Residue Lys-102 is modified to N6-carboxylysine. His-139 contributes to the substrate binding site. Residue Leu-222 participates in substrate binding. Residue Asp-250 coordinates Zn(2+). Asp-250 is an active-site residue. 2 residues coordinate substrate: His-254 and Ala-266.

It belongs to the metallo-dependent hydrolases superfamily. DHOase family. Class II DHOase subfamily. In terms of assembly, homodimer. It depends on Zn(2+) as a cofactor.

It carries out the reaction (S)-dihydroorotate + H2O = N-carbamoyl-L-aspartate + H(+). The protein operates within pyrimidine metabolism; UMP biosynthesis via de novo pathway; (S)-dihydroorotate from bicarbonate: step 3/3. In terms of biological role, catalyzes the reversible cyclization of carbamoyl aspartate to dihydroorotate. This chain is Dihydroorotase, found in Acidovorax sp. (strain JS42).